The sequence spans 227 residues: Cytochrome c oxidase subunit 2 (227 aa).

Topologically, residues 1–14 (MAHPVQLGFQDAAS) are mitochondrial intermembrane. Residues 15–45 (PIMEELLYFHDHTLMIMFLISSLVLYIISLM) form a helical membrane-spanning segment. Residues 46 to 59 (LTTKLTHTSTMDAQ) lie on the Mitochondrial matrix side of the membrane. A helical transmembrane segment spans residues 60–87 (EVETVWTILPAAILILIALPSLRILYMM). The Mitochondrial intermembrane portion of the chain corresponds to 88 to 227 (DEITSPSLTL…HFEEWLLFTL (140 aa)). Histidine 161, cysteine 196, glutamate 198, cysteine 200, histidine 204, and methionine 207 together coordinate Cu cation. Glutamate 198 is a Mg(2+) binding site.

The protein belongs to the cytochrome c oxidase subunit 2 family. Component of the cytochrome c oxidase (complex IV, CIV), a multisubunit enzyme composed of 14 subunits. The complex is composed of a catalytic core of 3 subunits MT-CO1, MT-CO2 and MT-CO3, encoded in the mitochondrial DNA, and 11 supernumerary subunits COX4I, COX5A, COX5B, COX6A, COX6B, COX6C, COX7A, COX7B, COX7C, COX8 and NDUFA4, which are encoded in the nuclear genome. The complex exists as a monomer or a dimer and forms supercomplexes (SCs) in the inner mitochondrial membrane with NADH-ubiquinone oxidoreductase (complex I, CI) and ubiquinol-cytochrome c oxidoreductase (cytochrome b-c1 complex, complex III, CIII), resulting in different assemblies (supercomplex SCI(1)III(2)IV(1) and megacomplex MCI(2)III(2)IV(2)). Found in a complex with TMEM177, COA6, COX18, COX20, SCO1 and SCO2. Interacts with TMEM177 in a COX20-dependent manner. Interacts with COX20. Interacts with COX16. The cofactor is Cu cation.

It localises to the mitochondrion inner membrane. The catalysed reaction is 4 Fe(II)-[cytochrome c] + O2 + 8 H(+)(in) = 4 Fe(III)-[cytochrome c] + 2 H2O + 4 H(+)(out). Its function is as follows. Component of the cytochrome c oxidase, the last enzyme in the mitochondrial electron transport chain which drives oxidative phosphorylation. The respiratory chain contains 3 multisubunit complexes succinate dehydrogenase (complex II, CII), ubiquinol-cytochrome c oxidoreductase (cytochrome b-c1 complex, complex III, CIII) and cytochrome c oxidase (complex IV, CIV), that cooperate to transfer electrons derived from NADH and succinate to molecular oxygen, creating an electrochemical gradient over the inner membrane that drives transmembrane transport and the ATP synthase. Cytochrome c oxidase is the component of the respiratory chain that catalyzes the reduction of oxygen to water. Electrons originating from reduced cytochrome c in the intermembrane space (IMS) are transferred via the dinuclear copper A center (CU(A)) of subunit 2 and heme A of subunit 1 to the active site in subunit 1, a binuclear center (BNC) formed by heme A3 and copper B (CU(B)). The BNC reduces molecular oxygen to 2 water molecules using 4 electrons from cytochrome c in the IMS and 4 protons from the mitochondrial matrix. The chain is Cytochrome c oxidase subunit 2 (MT-CO2) from Varecia variegata (Black-and-white ruffed lemur).